The sequence spans 423 residues: Glucose-1-phosphate adenylyltransferase (423 aa).

Residues Tyr-108, Gly-173, 188–189 (EK), and Ser-207 contribute to the alpha-D-glucose 1-phosphate site.

This sequence belongs to the bacterial/plant glucose-1-phosphate adenylyltransferase family. As to quaternary structure, homotetramer.

The enzyme catalyses alpha-D-glucose 1-phosphate + ATP + H(+) = ADP-alpha-D-glucose + diphosphate. It participates in glycan biosynthesis; glycogen biosynthesis. Involved in the biosynthesis of ADP-glucose, a building block required for the elongation reactions to produce glycogen. Catalyzes the reaction between ATP and alpha-D-glucose 1-phosphate (G1P) to produce pyrophosphate and ADP-Glc. This Francisella tularensis subsp. novicida (strain U112) protein is Glucose-1-phosphate adenylyltransferase.